A 224-amino-acid chain; its full sequence is Pre-hexon-linking protein VIII (224 aa).

The residue at position 64 (threonine 64) is a Phosphothreonine; by host. Residues 112 to 154 (RQLCPSQIGIKSPVLAGTGIQLSEDIPSASWIRPDGIFQLGGG) constitute a propeptide that is removed on maturation.

Belongs to the adenoviridae hexon-linking protein family. Interacts with the peripentonal hexons as well as the hexons in the facets. Part of a complex composed of the core-capsid bridging protein, the endosome lysis protein VI and the hexon-linking protein VIII; these interactions bridge the virus core to the capsid. In terms of processing, cleaved by the viral protease during virion maturation. May cause the middle segment to be shed from the capsid.

The protein resides in the virion. Its subcellular location is the host nucleus. Functionally, structural component of the virion that acts as a cement protein on the capsid interior and which glue the peripentonal hexons and group-of-nine hexons together. This chain is Pre-hexon-linking protein VIII, found in Canis lupus familiaris (Dog).